The sequence spans 296 residues: Nucleotide-binding protein spr1424 (296 aa).

Residue 13-20 coordinates ATP; sequence GMGGAGKT. Position 63 to 66 (63 to 66) interacts with GTP; sequence DMRS.

The protein belongs to the RapZ-like family.

Displays ATPase and GTPase activities. The polypeptide is Nucleotide-binding protein spr1424 (Streptococcus pneumoniae (strain ATCC BAA-255 / R6)).